The following is a 597-amino-acid chain: UvrABC system protein C (597 aa).

A GIY-YIG domain is found at 15–93 (DNPGVYQYYD…IKTLQPRYNV (79 aa)). In terms of domain architecture, UVR spans 207–242 (KESLKDFKKLMNNYAQNLQFEEAQKIKEKIEVLENY).

The protein belongs to the UvrC family. In terms of assembly, interacts with UvrB in an incision complex.

It localises to the cytoplasm. Functionally, the UvrABC repair system catalyzes the recognition and processing of DNA lesions. UvrC both incises the 5' and 3' sides of the lesion. The N-terminal half is responsible for the 3' incision and the C-terminal half is responsible for the 5' incision. This is UvrABC system protein C from Flavobacterium johnsoniae (strain ATCC 17061 / DSM 2064 / JCM 8514 / BCRC 14874 / CCUG 350202 / NBRC 14942 / NCIMB 11054 / UW101) (Cytophaga johnsonae).